The chain runs to 314 residues: 1,4-dihydroxy-2-naphthoyl-CoA synthase (314 aa).

Residues arginine 58, 103 to 107 (SGGDQ), tyrosine 115, 157 to 161 (WAAGG), threonine 184, serine 190, tyrosine 287, and lysine 302 each bind substrate.

This sequence belongs to the enoyl-CoA hydratase/isomerase family. MenB subfamily.

It catalyses the reaction 2-succinylbenzoyl-CoA + H(+) = 1,4-dihydroxy-2-naphthoyl-CoA + H2O. It participates in quinol/quinone metabolism; 1,4-dihydroxy-2-naphthoate biosynthesis; 1,4-dihydroxy-2-naphthoate from chorismate: step 6/7. Its pathway is quinol/quinone metabolism; menaquinone biosynthesis. Its function is as follows. Converts o-succinylbenzoyl-CoA (OSB-CoA) to 1,4-dihydroxy-2-naphthoyl-CoA (DHNA-CoA). This is 1,4-dihydroxy-2-naphthoyl-CoA synthase from Mycobacterium tuberculosis (strain CDC 1551 / Oshkosh).